The chain runs to 296 residues: MRKIKLIAVVGPTAVGKTALGIELAKTFNGEIISGDSQQVYQKLDIGTAKASKEEQEQAYHHLIDVREVNENYSVYDFVKEAKVAIDTIISKGKIPIIVGGTGLYLQSLFEGYHLGGEVNQETLMAYREKLESLSDEDLFEKLTEQSIVIPQVNRRRAIRALELAKFGNDLQNSESPYDVLLIGLNDDRQVLYDRINRRVDLMIDNGLLDEAKWLYDNYPSVQASRGIGYKELFPYFSKQIPLEEAVDKLKQNTRRFAKRQLTWFRNRMNVEFIMVGEENYQQKIKRKVSDFLSSK.

ATP is bound at residue 11–18 (GPTAVGKT). 13–18 (TAVGKT) lines the substrate pocket. The interval 36-39 (DSQQ) is interaction with substrate tRNA.

The protein belongs to the IPP transferase family. As to quaternary structure, monomer. The cofactor is Mg(2+).

The enzyme catalyses adenosine(37) in tRNA + dimethylallyl diphosphate = N(6)-dimethylallyladenosine(37) in tRNA + diphosphate. Functionally, catalyzes the transfer of a dimethylallyl group onto the adenine at position 37 in tRNAs that read codons beginning with uridine, leading to the formation of N6-(dimethylallyl)adenosine (i(6)A). The protein is tRNA dimethylallyltransferase of Streptococcus agalactiae serotype Ia (strain ATCC 27591 / A909 / CDC SS700).